We begin with the raw amino-acid sequence, 324 residues long: Ribosomal RNA small subunit methyltransferase H (324 aa).

S-adenosyl-L-methionine-binding positions include 41–43, Asp-60, Tyr-87, Asp-111, and Gln-118; that span reads GGH.

Belongs to the methyltransferase superfamily. RsmH family.

It is found in the cytoplasm. The catalysed reaction is cytidine(1402) in 16S rRNA + S-adenosyl-L-methionine = N(4)-methylcytidine(1402) in 16S rRNA + S-adenosyl-L-homocysteine + H(+). Specifically methylates the N4 position of cytidine in position 1402 (C1402) of 16S rRNA. In Nocardia farcinica (strain IFM 10152), this protein is Ribosomal RNA small subunit methyltransferase H.